Consider the following 193-residue polypeptide: Ion-translocating oxidoreductase complex subunit B (193 aa).

A hydrophobic region spans residues 1–26 (MSTMLIAVILLTLLALFFGVLLGFAA). Positions 32-90 (EGNPIVDELEAILPQTQCGQCGYPGCRPYAEAIANGDKVNKCPPGGTATMEKLASLMGV) constitute a 4Fe-4S domain. [4Fe-4S] cluster contacts are provided by Cys49, Cys52, Cys57, Cys73, Cys114, Cys117, Cys120, Cys124, Cys144, Cys147, Cys150, and Cys154. 4Fe-4S ferredoxin-type domains follow at residues 105-134 (KVAYIREDECIGCTKCIQACPVDAIIGAGK) and 136-164 (MHTVLTADCTGCDLCVEPCPVDCIDMIPV).

This sequence belongs to the 4Fe4S bacterial-type ferredoxin family. RnfB subfamily. The complex is composed of six subunits: RnfA, RnfB, RnfC, RnfD, RnfE and RnfG. The cofactor is [4Fe-4S] cluster.

The protein localises to the cell inner membrane. Its function is as follows. Part of a membrane-bound complex that couples electron transfer with translocation of ions across the membrane. This is Ion-translocating oxidoreductase complex subunit B from Shewanella sp. (strain MR-7).